A 586-amino-acid polypeptide reads, in one-letter code: Glutamate--tRNA ligase (586 aa).

Residues 84 to 111 (LTDIESEDTTDTYDLPSLPGVSDDEPTQ) are disordered. A compositionally biased stretch (acidic residues) spans 85–94 (TDIESEDTTD). Residues 119–129 (PNPNGPWHIGH) carry the 'HIGH' region motif.

The protein belongs to the class-I aminoacyl-tRNA synthetase family. Glutamate--tRNA ligase type 2 subfamily.

It localises to the cytoplasm. It carries out the reaction tRNA(Glu) + L-glutamate + ATP = L-glutamyl-tRNA(Glu) + AMP + diphosphate. In terms of biological role, catalyzes the attachment of glutamate to tRNA(Glu) in a two-step reaction: glutamate is first activated by ATP to form Glu-AMP and then transferred to the acceptor end of tRNA(Glu). This chain is Glutamate--tRNA ligase, found in Haloquadratum walsbyi (strain DSM 16790 / HBSQ001).